A 444-amino-acid polypeptide reads, in one-letter code: Ribulose bisphosphate carboxylase large chain (444 aa).

At Lys-5 the chain carries N6,N6,N6-trimethyllysine. Substrate is bound by residues Asn-114 and Thr-164. The active-site Proton acceptor is Lys-166. Lys-168 lines the substrate pocket. 3 residues coordinate Mg(2+): Lys-192, Asp-194, and Glu-195. At Lys-192 the chain carries N6-carboxylysine. His-285 acts as the Proton acceptor in catalysis. Substrate is bound by residues Arg-286, His-318, and Ser-370.

It belongs to the RuBisCO large chain family. Type I subfamily. In terms of assembly, heterohexadecamer of 8 large chains and 8 small chains; disulfide-linked. The disulfide link is formed within the large subunit homodimers. Mg(2+) serves as cofactor. In terms of processing, the disulfide bond which can form in the large chain dimeric partners within the hexadecamer appears to be associated with oxidative stress and protein turnover.

The protein localises to the plastid. It localises to the chloroplast. It catalyses the reaction 2 (2R)-3-phosphoglycerate + 2 H(+) = D-ribulose 1,5-bisphosphate + CO2 + H2O. The enzyme catalyses D-ribulose 1,5-bisphosphate + O2 = 2-phosphoglycolate + (2R)-3-phosphoglycerate + 2 H(+). In terms of biological role, ruBisCO catalyzes two reactions: the carboxylation of D-ribulose 1,5-bisphosphate, the primary event in carbon dioxide fixation, as well as the oxidative fragmentation of the pentose substrate in the photorespiration process. Both reactions occur simultaneously and in competition at the same active site. The chain is Ribulose bisphosphate carboxylase large chain from Ginkgo biloba (Ginkgo).